Here is a 239-residue protein sequence, read N- to C-terminus: Transcriptional regulatory protein DcuR (239 aa).

Residues N3–R121 enclose the Response regulatory domain. Position 56 is a 4-aspartylphosphate (D56). A DNA-binding region (H-T-H motif) is located at residues T181–I200.

Post-translationally, phosphorylated and activated by DcuS.

It localises to the cytoplasm. In terms of biological role, member of the two-component regulatory system DcuR/DcuS. Involved in the C4-dicarboxylate-stimulated regulation of the genes encoding the anaerobic fumarate respiratory system (frdABCD; nuoAN; dcuB; dcuC; sdhCDAB; etc.). Weakly regulates the aerobic C4-dicarboxylate transporter dctA. This is Transcriptional regulatory protein DcuR (dcuR) from Escherichia coli O157:H7.